The chain runs to 89 residues: MTTANTNETAAAAAAKNRRNKKKKRVCAFCADNIDRIDYKDVARLRKYITERGKILPRRITGNCARHQRQLTKAIKRARQIALLPYTVE.

The segment covering 1–15 (MTTANTNETAAAAAA) has biased composition (low complexity). The tract at residues 1–22 (MTTANTNETAAAAAAKNRRNKK) is disordered.

Belongs to the bacterial ribosomal protein bS18 family. Part of the 30S ribosomal subunit. Forms a tight heterodimer with protein bS6.

Its function is as follows. Binds as a heterodimer with protein bS6 to the central domain of the 16S rRNA, where it helps stabilize the platform of the 30S subunit. The protein is Small ribosomal subunit protein bS18 of Caldanaerobacter subterraneus subsp. tengcongensis (strain DSM 15242 / JCM 11007 / NBRC 100824 / MB4) (Thermoanaerobacter tengcongensis).